The following is a 717-amino-acid chain: Methionine--tRNA ligase (717 aa).

Residues 19–29 (PYANGDLHVGH) carry the 'HIGH' region motif. The Zn(2+) site is built by cysteine 150, cysteine 153, cysteine 162, and cysteine 166. A 'KMSKS' region motif is present at residues 356 to 360 (ALSTS). Position 359 (threonine 359) interacts with ATP. A disordered region spans residues 573-603 (ERVEEASEASAEASNEGGEAAGDEVDDGDVD). Positions 580–590 (EASAEASNEGG) are enriched in low complexity. The segment covering 593-603 (AGDEVDDGDVD) has biased composition (acidic residues). The 99-residue stretch at 619 to 717 (DFEGVDMRVG…EDAPLGTRIK (99 aa)) folds into the tRNA-binding domain.

Belongs to the class-I aminoacyl-tRNA synthetase family. MetG type 1 subfamily. Homodimer. Zn(2+) is required as a cofactor.

The protein resides in the cytoplasm. The catalysed reaction is tRNA(Met) + L-methionine + ATP = L-methionyl-tRNA(Met) + AMP + diphosphate. Is required not only for elongation of protein synthesis but also for the initiation of all mRNA translation through initiator tRNA(fMet) aminoacylation. This is Methionine--tRNA ligase from Haloarcula marismortui (strain ATCC 43049 / DSM 3752 / JCM 8966 / VKM B-1809) (Halobacterium marismortui).